A 444-amino-acid chain; its full sequence is Proline--tRNA ligase (444 aa).

The protein belongs to the class-II aminoacyl-tRNA synthetase family. ProS type 2 subfamily. In terms of assembly, homodimer.

The protein localises to the cytoplasm. The catalysed reaction is tRNA(Pro) + L-proline + ATP = L-prolyl-tRNA(Pro) + AMP + diphosphate. Functionally, catalyzes the attachment of proline to tRNA(Pro) in a two-step reaction: proline is first activated by ATP to form Pro-AMP and then transferred to the acceptor end of tRNA(Pro). This Maricaulis maris (strain MCS10) (Caulobacter maris) protein is Proline--tRNA ligase.